The sequence spans 543 residues: Hydroxylamine reductase (543 aa).

Residues Cys-5, Cys-8, Cys-17, and Cys-23 each coordinate [4Fe-4S] cluster. His-236, Glu-260, Cys-304, Cys-398, Cys-426, Cys-451, Glu-486, and Lys-488 together coordinate hybrid [4Fe-2O-2S] cluster. At Cys-398 the chain carries Cysteine persulfide.

Belongs to the HCP family. [4Fe-4S] cluster serves as cofactor. It depends on hybrid [4Fe-2O-2S] cluster as a cofactor.

It localises to the cytoplasm. The enzyme catalyses A + NH4(+) + H2O = hydroxylamine + AH2 + H(+). Catalyzes the reduction of hydroxylamine to form NH(3) and H(2)O. This is Hydroxylamine reductase from Bacteroides fragilis (strain YCH46).